Reading from the N-terminus, the 535-residue chain is Bifunctional purine biosynthesis protein PurH (535 aa).

The MGS-like domain maps to Thr-6–Val-151.

It belongs to the PurH family.

It carries out the reaction (6R)-10-formyltetrahydrofolate + 5-amino-1-(5-phospho-beta-D-ribosyl)imidazole-4-carboxamide = 5-formamido-1-(5-phospho-D-ribosyl)imidazole-4-carboxamide + (6S)-5,6,7,8-tetrahydrofolate. It catalyses the reaction IMP + H2O = 5-formamido-1-(5-phospho-D-ribosyl)imidazole-4-carboxamide. Its pathway is purine metabolism; IMP biosynthesis via de novo pathway; 5-formamido-1-(5-phospho-D-ribosyl)imidazole-4-carboxamide from 5-amino-1-(5-phospho-D-ribosyl)imidazole-4-carboxamide (10-formyl THF route): step 1/1. It functions in the pathway purine metabolism; IMP biosynthesis via de novo pathway; IMP from 5-formamido-1-(5-phospho-D-ribosyl)imidazole-4-carboxamide: step 1/1. In Ectopseudomonas mendocina (strain ymp) (Pseudomonas mendocina), this protein is Bifunctional purine biosynthesis protein PurH.